We begin with the raw amino-acid sequence, 229 residues long: 2-C-methyl-D-erythritol 4-phosphate cytidylyltransferase (229 aa).

This sequence belongs to the IspD/TarI cytidylyltransferase family. IspD subfamily.

The enzyme catalyses 2-C-methyl-D-erythritol 4-phosphate + CTP + H(+) = 4-CDP-2-C-methyl-D-erythritol + diphosphate. Its pathway is isoprenoid biosynthesis; isopentenyl diphosphate biosynthesis via DXP pathway; isopentenyl diphosphate from 1-deoxy-D-xylulose 5-phosphate: step 2/6. Catalyzes the formation of 4-diphosphocytidyl-2-C-methyl-D-erythritol from CTP and 2-C-methyl-D-erythritol 4-phosphate (MEP). The protein is 2-C-methyl-D-erythritol 4-phosphate cytidylyltransferase of Clostridium botulinum (strain Okra / Type B1).